The sequence spans 93 residues: MDGIKYAVFTEKSIRLLGNNQYTSNVESGSTRTEIKHWIELFFGVKVVAMNSHRLPGKGRRMGPIMRHTMHYRRMIITLQPGYSIPPLIEKRT.

It belongs to the universal ribosomal protein uL23 family. In terms of assembly, part of the 50S ribosomal subunit.

It is found in the plastid. Its subcellular location is the chloroplast. Binds to 23S rRNA. The sequence is that of Large ribosomal subunit protein uL23cz/uL23cy (rpl23-A) from Nymphaea alba (White water-lily).